The primary structure comprises 89 residues: Small ribosomal subunit protein uS15 (89 aa).

It belongs to the universal ribosomal protein uS15 family. As to quaternary structure, part of the 30S ribosomal subunit. Forms a bridge to the 50S subunit in the 70S ribosome, contacting the 23S rRNA.

Its function is as follows. One of the primary rRNA binding proteins, it binds directly to 16S rRNA where it helps nucleate assembly of the platform of the 30S subunit by binding and bridging several RNA helices of the 16S rRNA. Functionally, forms an intersubunit bridge (bridge B4) with the 23S rRNA of the 50S subunit in the ribosome. The sequence is that of Small ribosomal subunit protein uS15 from Roseiflexus sp. (strain RS-1).